A 209-amino-acid polypeptide reads, in one-letter code: NAD(P)H-quinone oxidoreductase subunit K 2 (209 aa).

The [4Fe-4S] cluster site is built by C53, C54, C118, and C149.

Belongs to the complex I 20 kDa subunit family. In terms of assembly, NDH-1 can be composed of about 15 different subunits; different subcomplexes with different compositions have been identified which probably have different functions. [4Fe-4S] cluster serves as cofactor.

It localises to the cellular thylakoid membrane. The enzyme catalyses a plastoquinone + NADH + (n+1) H(+)(in) = a plastoquinol + NAD(+) + n H(+)(out). It catalyses the reaction a plastoquinone + NADPH + (n+1) H(+)(in) = a plastoquinol + NADP(+) + n H(+)(out). In terms of biological role, NDH-1 shuttles electrons from an unknown electron donor, via FMN and iron-sulfur (Fe-S) centers, to quinones in the respiratory and/or the photosynthetic chain. The immediate electron acceptor for the enzyme in this species is believed to be plastoquinone. Couples the redox reaction to proton translocation, and thus conserves the redox energy in a proton gradient. Cyanobacterial NDH-1 also plays a role in inorganic carbon-concentration. The chain is NAD(P)H-quinone oxidoreductase subunit K 2 from Acaryochloris marina (strain MBIC 11017).